Reading from the N-terminus, the 203-residue chain is Alpha-amylase/subtilisin inhibitor (203 aa).

Over residues 1-12 (MGSRRAGSSSSP) the composition is skewed to polar residues. The signal sequence occupies residues 1–22 (MGSRRAGSSSSPLFWPAPPSRA). The disordered stretch occupies residues 1-34 (MGSRRAGSSSSPLFWPAPPSRAADPPPVHDTDGH). Residues 15-26 (WPAPPSRAADPP) show a composition bias toward pro residues. 2 disulfide bridges follow: cysteine 65–cysteine 112 and cysteine 166–cysteine 170.

This sequence belongs to the protease inhibitor I3 (leguminous Kunitz-type inhibitor) family.

Functionally, this protein inhibits independently subtilisin and alpha-amylase. The sequence is that of Alpha-amylase/subtilisin inhibitor from Hordeum vulgare (Barley).